A 271-amino-acid chain; its full sequence is RELT-like protein 1 (271 aa).

The first 23 residues, Met-1–Ser-23, serve as a signal peptide directing secretion. Over Ser-24–Glu-57 the chain is Extracellular. The disordered stretch occupies residues Ala-28 to Asn-53. Residues Asn-31 and Asn-49 are each glycosylated (N-linked (GlcNAc...) asparagine). Polar residues predominate over residues Asn-31 to Gly-52. A helical membrane pass occupies residues Tyr-58–Cys-78. Topologically, residues His-79–Glu-271 are cytoplasmic. Residues Thr-89–Asn-113 adopt a coiled-coil conformation. 2 positions are modified to phosphoserine: Ser-109 and Ser-114. Disordered regions lie at residues Asp-145–Lys-173 and Val-233–Glu-271. Pro residues predominate over residues Pro-155–Leu-165. The segment covering Val-233–Ser-244 has biased composition (basic and acidic residues). Ser-244 and Ser-247 each carry phosphoserine.

The protein belongs to the RELT family. As to quaternary structure, interacts with RELT, RELL2 and OXSR1. Interacts with PLSCR1. In terms of processing, phosphorylated in vitro by OXSR1. As to expression, widely expressed. Expressed at highest levels in the placenta, skeletal muscle, spleen and testis.

It localises to the cell membrane. Its function is as follows. Induces activation of MAPK14/p38 cascade, when overexpressed. Induces apoptosis, when overexpressed. The polypeptide is RELT-like protein 1 (RELL1) (Homo sapiens (Human)).